The chain runs to 331 residues: Major ferric iron-binding protein (331 aa).

The first 22 residues, 1-22, serve as a signal peptide directing secretion; sequence MKTSIRYALLAAALTAATPALA. Residues histidine 31, glutamate 79, tyrosine 217, and tyrosine 218 each coordinate Fe cation.

Belongs to the bacterial solute-binding protein 1 family.

Its subcellular location is the periplasm. Its function is as follows. This protein may be a central component in the iron-acquisition system. The chain is Major ferric iron-binding protein (fbpA) from Neisseria meningitidis serogroup B (strain ATCC BAA-335 / MC58).